The sequence spans 377 residues: 26S proteasome non-ATPase regulatory subunit 4 (377 aa).

The region spanning 5 to 188 (STMVCVDNSE…LADALISSPI (184 aa)) is the VWFA domain. Lysine 122 participates in a covalent cross-link: Glycyl lysine isopeptide (Lys-Gly) (interchain with G-Cter in SUMO2). The interval 197–262 (LGLGASDFEF…TEDSDDALLK (66 aa)) is interaction with UBQLN1. One can recognise a UIM 1 domain in the interval 211–230 (SADPELALALRVSMEEQRQR). An essential for ubiquitin-binding region spans residues 216-220 (LALAL). The span at 224–237 (MEEQRQRQEEEARR) shows a compositional bias: basic and acidic residues. Positions 224 to 255 (MEEQRQRQEEEARRAAAASAAEAGIATTGTED) are disordered. Residues threonine 250 and threonine 253 each carry the phosphothreonine modification. Serine 256 and serine 266 each carry phosphoserine. The 20-residue stretch at 282-301 (TEEEQIAYAMQMSLQGAEFG) folds into the UIM 2 domain. The tract at residues 287–291 (IAYAM) is essential for ubiquitin-binding. Disordered stretches follow at residues 300–327 (FGQA…DDYD) and 341–377 (NLPG…EDKK). A phosphoserine mark is found at serine 358 and serine 361. The segment covering 365-377 (KDGKKDKKEEDKK) has biased composition (basic and acidic residues).

It belongs to the proteasome subunit S5A family. As to quaternary structure, component of the 19S proteasome regulatory particle complex. The 26S proteasome consists of a 20S core particle (CP) and two 19S regulatory subunits (RP). The regulatory particle is made of a lid composed of 9 subunits, a base containing 6 ATPases and few additional components including PSMD4. Interacts with NUB1. Interacts with SQSTM1. Interacts with UBQLN4. Interacts with UBE3A. Interacts with UBQLN1 (via ubiquitin-like domain). Interacts with DDI2.

Its function is as follows. Component of the 26S proteasome, a multiprotein complex involved in the ATP-dependent degradation of ubiquitinated proteins. This complex plays a key role in the maintenance of protein homeostasis by removing misfolded or damaged proteins, which could impair cellular functions, and by removing proteins whose functions are no longer required. Therefore, the proteasome participates in numerous cellular processes, including cell cycle progression, apoptosis, or DNA damage repair. PSMD4 acts as an ubiquitin receptor subunit through ubiquitin-interacting motifs and selects ubiquitin-conjugates for destruction. Displays a preferred selectivity for longer polyubiquitin chains. This is 26S proteasome non-ATPase regulatory subunit 4 (PSMD4) from Homo sapiens (Human).